The sequence spans 1032 residues: Kinesin heavy chain isoform 5A (1032 aa).

Ala2 carries the post-translational modification N-acetylalanine. A Kinesin motor domain is found at 9-327 (SIKVLCRFRP…LMFGQRAKTI (319 aa)). 86–93 (GQTSSGKT) lines the ATP pocket. The interval 174–315 (VSGPEEILDV…PSSYNDAETK (142 aa)) is microtubule-binding. The necessary for interaction with ZFYVE27 stretch occupies residues 271 to 361 (EGTKSYVPYR…KTKAQKETIA (91 aa)). Residues 331 to 906 (ASVNLELTAE…VDRIKEAVRY (576 aa)) are a coiled coil. Residues 353 to 1032 (TKAQKETIAK…FPLHQETAAS (680 aa)) are interaction with BICD2. Thr397 is subject to Phosphothreonine. A disordered region spans residues 904–939 (VRYKSSGKRGHSAQIAKPVRPGHYPASSPTNPYGTR). Residues 907–1032 (KSSGKRGHSA…FPLHQETAAS (126 aa)) are globular.

Belongs to the TRAFAC class myosin-kinesin ATPase superfamily. Kinesin family. Kinesin subfamily. Oligomer composed of two heavy chains and two light chains. Interacts with GRIP1. Interacts with FMR1 (via C-terminus); this interaction is increased in a mGluR-dependent manner. Interacts with BORCS5. Interacts with ZFYVE27. Interacts with VAPA, VAPB, SURF4, RAB11A (GDP-bound form), RAB11B (GDP-bound form) and RTN3 in a ZFYVE27-dependent manner. Interacts with BICD2. Interacts with DTNB.

The protein localises to the cytoplasm. The protein resides in the perinuclear region. It is found in the cytoskeleton. Its subcellular location is the perikaryon. The catalysed reaction is ATP + H2O + a kinesin associated with a microtubule at position (n) = ADP + phosphate a kinesin associated with a microtubule at position (n+1, toward the plus end).. Functionally, microtubule-dependent motor required for slow axonal transport of neurofilament proteins (NFH, NFM and NFL). Can induce formation of neurite-like membrane protrusions in non-neuronal cells in a ZFYVE27-dependent manner. The ZFYVE27-KIF5A complex contributes to the vesicular transport of VAPA, VAPB, SURF4, RAB11A, RAB11B and RTN3 proteins in neurons. Required for anterograde axonal transportation of MAPK8IP3/JIP3 which is essential for MAPK8IP3/JIP3 function in axon elongation. In Pongo abelii (Sumatran orangutan), this protein is Kinesin heavy chain isoform 5A (KIF5A).